Reading from the N-terminus, the 272-residue chain is RELT-like protein 1 (272 aa).

Positions 1–23 are cleaved as a signal peptide; that stretch reads MALWGLPGSAVLAASVFVGGAVS. Topologically, residues 24–58 are extracellular; it reads SPLVAADNTGSHTLHSRAETTPSSPTNNPGNGHPE. The disordered stretch occupies residues 33-52; that stretch reads GSHTLHSRAETTPSSPTNNP. A helical membrane pass occupies residues 59–79; that stretch reads YIAYVLVPVFFVMGLLGVLIC. Over 80 to 272 the chain is Cytoplasmic; sequence HLLKKKGYRC…PVKRERSDTE (193 aa). Residues 90 to 114 are a coiled coil; it reads TTEAEQEVEEEKVEKIELNDSINEN. A phosphoserine mark is found at serine 110 and serine 115. Disordered stretches follow at residues 146–171 and 235–272; these read DIES…PGAT and EHKS…SDTE. Residues 156–166 show a composition bias toward pro residues; it reads PGSPPVSPGPL. Residues 235–245 show a composition bias toward basic and acidic residues; sequence EHKSNQKERRS. 2 positions are modified to phosphoserine: serine 245 and serine 248.

Belongs to the RELT family. As to quaternary structure, interacts with RELT, RELL2, OXSR1 and PLSCR1.

The protein resides in the cell membrane. Functionally, induces activation of MAPK14/p38 cascade, when overexpressed. Induces apoptosis, when overexpressed. The chain is RELT-like protein 1 (Rell1) from Mus musculus (Mouse).